The sequence spans 259 residues: MFHEFHACQHADAPTLVLSSGLGGSGRYWADDLTLLTRDYHVLVYDHAGTGRSPAVLPADYSIRHMAIELLALLDSLDIQRCHFMGHALGGLVGLELALLRPELLHSQVLINAWSSPNPHSARCFSVRKKLLLNSGPEAYVQAQALFLYPADWIAANGPRLADDEAHALAHFPDTDNLLRRIHALETFDVSAELSRIHTPTLLIANRDDMLVPWQQSRHLANALPNATLVLLEYGGHASNITDPLPFQRALRAFLSTQP.

Belongs to the AB hydrolase superfamily. Hydrolase RutD family.

The catalysed reaction is carbamate + 2 H(+) = NH4(+) + CO2. Functionally, involved in pyrimidine catabolism. May facilitate the hydrolysis of carbamate, a reaction that can also occur spontaneously. The chain is Putative carbamate hydrolase RutD from Pseudomonas syringae pv. syringae (strain B728a).